The primary structure comprises 941 residues: Zinc finger protein su(Hw) (941 aa).

2 disordered regions span residues 1–97 (MSAS…APAA) and 176–211 (ENNN…NSSQ). The span at 47–57 (STTTTTSRTPS) shows a compositional bias: low complexity. Residues 185-202 (VTEDDEDLGEDGDEDGED) show a composition bias toward acidic residues. Thr186 carries the post-translational modification Phosphothreonine. The C2H2-type 1; atypical zinc-finger motif lies at 220 to 242 (HVCGKCYKTFRRVQSLKKHLEFC). The C2H2-type 2 zinc-finger motif lies at 290–313 (INCPDCPKSFKTQTSYERHIFITH). The segment at 319–341 (FPCSICNANLRSEALLALHEEQH) adopts a C2H2-type 3; atypical zinc-finger fold. C2H2-type zinc fingers lie at residues 348 to 366 (YACK…LKRH), 380 to 402 (MSCK…LKQH), 413 to 435 (YMCH…IRTH), 441 to 463 (FDCD…RRYH), 469 to 491 (YSCT…MKRH), 497 to 519 (HKCD…SKTH), 523 to 545 (FPCE…VKTH), 553 to 577 (FSCA…EGKH), and 596 to 619 (TDCA…RTVH). The interval 760-860 (ILTEEDIKLK…PIDDVIEYVL (101 aa)) is interaction with mod(mdg4). The tract at residues 864 to 941 (DQDEGGLDKD…KKPVGEQEKA (78 aa)) is disordered. Composition is skewed to basic and acidic residues over residues 869 to 880 (GLDKDNESHSGD) and 891 to 941 (KTNE…QEKA).

Component of the gypsy chromatin insulator complex, composed of Cp190, mod(mdg4) and su(Hw). The gypsy chromatin insulator complex interacts with Topors via mod(mdg4) and su(Hw). Upon ecdysone stimulation, interacts with Nup98.

It is found in the nucleus. It localises to the chromosome. Its function is as follows. Component of the gypsy chromatin insulator complex which is required for the function of the gypsy chromatin insulator and other endogenous chromatin insulators. Chromatin insulators are regulatory elements which establish independent domains of transcriptional activity within eukaryotic genomes. Insulators have two defining properties; they can block the communication between an enhancer and a promoter when placed between them and can also buffer transgenes from position effect variegation (PEV). Insulators are proposed to structure the chromatin fiber into independent domains of differing transcriptional potential by promoting the formation of distinct chromatin loops. This chromatin looping may involve the formation of insulator bodies, where homotypic interactions between individual subunits of the insulator complex could promote the clustering of widely spaced insulators at the nuclear periphery. Within the gypsy insulator complex, this protein binds specifically to a region of the gypsy element located 3' of the 5' long terminal repeat (LTR), and may also mediate interaction with other endogenous insulators at sites distinct from those recognized by Cp190. Cooperates with pita and cliff to recruit Cp190 and regulate insulator function at the front-ultraabdominal (Fub) boundary. The chain is Zinc finger protein su(Hw) from Drosophila melanogaster (Fruit fly).